Consider the following 279-residue polypeptide: Calcium-binding protein 4 (279 aa).

Residues 1 to 12 show a composition bias toward basic and acidic residues; that stretch reads MAEEQGRGRHGP. Positions 1 to 114 are disordered; that stretch reads MAEEQGRGRH…PGPQHDAAQR (114 aa). S42 is modified (phosphoserine). Over residues 55-65 the composition is skewed to polar residues; that stretch reads GPSSSGEQTPM. 4 EF-hand domains span residues 133–168, 187–204, 210–245, and 247–279; these read EELD…LGYM, GRVD…KLRE, LGLR…LLGE, and LVGP…LSRH. The Ca(2+) site is built by D146, D148, D150, Y152, and D157. The Ca(2+) site is built by D223, D225, D227, R229, E234, D260, N262, D264, T266, and E271.

In terms of assembly, interacts with CACNA1F and CACNA1D (via IQ domain) in a calcium independent manner. Interacts (via N-terminus) with UNC119. In terms of processing, phosphorylated. Phosphorylation levels change with the light conditions and regulate the activity. Expressed in the retina.

Its subcellular location is the cytoplasm. The protein resides in the presynapse. Its function is as follows. May play a role in normal synaptic function, probably through regulation of Ca(2+) influx and neurotransmitter release in photoreceptor synaptic terminals and in auditory transmission. Modulator of CACNA1F, shifting the activation range to more hyperpolarized voltages. The sequence is that of Calcium-binding protein 4 (CABP4) from Bos taurus (Bovine).